Here is a 187-residue protein sequence, read N- to C-terminus: Large ribosomal subunit protein bL32m (187 aa).

Zn(2+) is bound by residues C109, C112, C122, and C125.

The protein belongs to the bacterial ribosomal protein bL32 family. In terms of assembly, component of the mitochondrial ribosome large subunit (39S) which comprises a 16S rRNA and about 50 distinct proteins. MRPL32 precursor is processed by the m-AAA protease (composed of AFG3L2 and SPG7), which cleaves the N-terminal transit peptide. Cleavage by the m-AAA protease takes place prior to assembly into the large subunit, an essential step for mitochondrial ribosome (mitoribosome) assembly. Proper processing by the m-AAA protease is dependent on the zinc-binding region within the tightly folded C-terminal domain of MRPL32: zinc-dependent folding halts degradation initiated from the N-terminus and triggers the release of mature MRPL32.

The protein resides in the mitochondrion. Its function is as follows. Component of the mitochondrial large ribosomal subunit (mt-LSU). The mitochondrial ribosome (mitoribosome) is a large ribonucleoprotein complex responsible for the synthesis of proteins inside mitochondria. This chain is Large ribosomal subunit protein bL32m (Mrpl32), found in Mus musculus (Mouse).